A 122-amino-acid polypeptide reads, in one-letter code: S-adenosylmethionine decarboxylase proenzyme (122 aa).

The Schiff-base intermediate with substrate; via pyruvic acid role is filled by serine 69. Serine 69 is subject to Pyruvic acid (Ser); by autocatalysis. Catalysis depends on histidine 74, which acts as the Proton acceptor; for processing activity. Residue cysteine 89 is the Proton donor; for catalytic activity of the active site.

It belongs to the prokaryotic AdoMetDC family. Type 1 subfamily. As to quaternary structure, heterotetramer of two alpha and two beta chains arranged as a dimer of alpha/beta heterodimers. Pyruvate serves as cofactor. In terms of processing, is synthesized initially as an inactive proenzyme. Formation of the active enzyme involves a self-maturation process in which the active site pyruvoyl group is generated from an internal serine residue via an autocatalytic post-translational modification. Two non-identical subunits are generated from the proenzyme in this reaction, and the pyruvate is formed at the N-terminus of the alpha chain, which is derived from the carboxyl end of the proenzyme. The post-translation cleavage follows an unusual pathway, termed non-hydrolytic serinolysis, in which the side chain hydroxyl group of the serine supplies its oxygen atom to form the C-terminus of the beta chain, while the remainder of the serine residue undergoes an oxidative deamination to produce ammonia and the pyruvoyl group blocking the N-terminus of the alpha chain.

It carries out the reaction S-adenosyl-L-methionine + H(+) = S-adenosyl 3-(methylsulfanyl)propylamine + CO2. It participates in amine and polyamine biosynthesis; S-adenosylmethioninamine biosynthesis; S-adenosylmethioninamine from S-adenosyl-L-methionine: step 1/1. Functionally, catalyzes the decarboxylation of S-adenosylmethionine to S-adenosylmethioninamine (dcAdoMet), the propylamine donor required for the synthesis of the polyamines spermine and spermidine from the diamine putrescine. This Sulfolobus acidocaldarius (strain ATCC 33909 / DSM 639 / JCM 8929 / NBRC 15157 / NCIMB 11770) protein is S-adenosylmethionine decarboxylase proenzyme.